A 345-amino-acid chain; its full sequence is Dihydroorotate dehydrogenase (quinone) (345 aa).

Residues 65-69 and Thr89 contribute to the FMN site; that span reads AGLDK. Lys69 contacts substrate. Residue 114–118 participates in substrate binding; it reads NRMGF. FMN contacts are provided by Asn142 and Asn175. Asn175 is a substrate binding site. Residue Ser178 is the Nucleophile of the active site. Asn180 is a binding site for substrate. The FMN site is built by Lys220 and Thr248. Residue 249–250 coordinates substrate; it reads NT. Residues Gly271, Gly300, and 321–322 contribute to the FMN site; that span reads YT.

It belongs to the dihydroorotate dehydrogenase family. Type 2 subfamily. In terms of assembly, monomer. The cofactor is FMN.

Its subcellular location is the cell membrane. The enzyme catalyses (S)-dihydroorotate + a quinone = orotate + a quinol. It participates in pyrimidine metabolism; UMP biosynthesis via de novo pathway; orotate from (S)-dihydroorotate (quinone route): step 1/1. Its function is as follows. Catalyzes the conversion of dihydroorotate to orotate with quinone as electron acceptor. The protein is Dihydroorotate dehydrogenase (quinone) of Burkholderia cenocepacia (strain HI2424).